The primary structure comprises 373 residues: Zinc finger CCCH domain-containing protein 15 homolog (373 aa).

The tract at residues 1–27 is disordered; the sequence is MPPKQAQSKKTVEKEKKKKVEDKTFGL. The span at 10 to 25 shows a compositional bias: basic and acidic residues; sequence KTVEKEKKKKVEDKTF. C3H1-type zinc fingers lie at residues 95–123 and 167–205; these read DPKS…HDLA and KPTA…HCLP. Residues 252 to 326 are a coiled coil; the sequence is KEEKRLQKEK…ALANQINTSL (75 aa). Positions 325–373 are disordered; the sequence is SLFTDGGVLPSDDDDDDDDDDDDDEDGDDEEEDDDEEEGEYEEEEASDE. Positions 335-373 are enriched in acidic residues; sequence SDDDDDDDDDDDDDEDGDDEEEDDDEEEGEYEEEEASDE.

It belongs to the ZC3H15/TMA46 family.

The chain is Zinc finger CCCH domain-containing protein 15 homolog from Dictyostelium discoideum (Social amoeba).